We begin with the raw amino-acid sequence, 155 residues long: Rhombotin-1 (155 aa).

LIM zinc-binding domains lie at 21-83 (KGCA…LFGT) and 85-147 (GNCA…GQLN).

The protein resides in the nucleus. Its function is as follows. May be involved in gene regulation within neural lineage cells potentially by direct DNA binding or by binding to other transcription factors. This is Rhombotin-1 from Danio rerio (Zebrafish).